The following is a 123-amino-acid chain: Probable prefoldin subunit 4 (123 aa).

Belongs to the prefoldin subunit beta family. As to quaternary structure, heterohexamer of two PFD-alpha type and four PFD-beta type subunits.

In terms of biological role, binds specifically to cytosolic chaperonin (c-CPN) and transfers target proteins to it. Binds to nascent polypeptide chain and promotes folding in an environment in which there are many competing pathways for nonnative proteins. This is Probable prefoldin subunit 4 from Schizosaccharomyces pombe (strain 972 / ATCC 24843) (Fission yeast).